A 749-amino-acid chain; its full sequence is Replication restart protein PriA (749 aa).

The region spanning 224-391 is the Helicase ATP-binding domain; that stretch reads SLKTSQFHTH…LSGKYVLSRL (168 aa). Position 237–244 (237–244) interacts with ATP; it reads GITGSGKT. The DEAH box motif lies at 333–336; that stretch reads DEEH. Zn(2+) contacts are provided by cysteine 454, cysteine 457, cysteine 463, cysteine 466, cysteine 481, cysteine 484, cysteine 495, and cysteine 498. In terms of domain architecture, Helicase C-terminal spans 490–658; it reads DLPQSCPKCL…EYPPFIRLIR (169 aa).

This sequence belongs to the helicase family. PriA subfamily. In terms of assembly, component of the replication restart primosome. The cofactor is Zn(2+).

It carries out the reaction Couples ATP hydrolysis with the unwinding of duplex DNA by translocating in the 3'-5' direction.. The enzyme catalyses ATP + H2O = ADP + phosphate + H(+). In terms of biological role, initiates the restart of stalled replication forks, which reloads the replicative helicase on sites other than the origin of replication. Recognizes and binds to abandoned replication forks and remodels them to uncover a helicase loading site. Promotes assembly of the primosome at these replication forks. The chain is Replication restart protein PriA from Chlamydia pneumoniae (Chlamydophila pneumoniae).